The following is a 375-amino-acid chain: Queuine tRNA-ribosyltransferase (375 aa).

Residue D89 is the Proton acceptor of the active site. Substrate is bound by residues 89–93 (DSGGF), D143, Q187, and G214. The tract at residues 245 to 251 (GVGKPED) is RNA binding. D264 functions as the Nucleophile in the catalytic mechanism. Residues 269-273 (TRNAR) are RNA binding; important for wobble base 34 recognition. Zn(2+)-binding residues include C302, C304, C307, and H333.

Belongs to the queuine tRNA-ribosyltransferase family. As to quaternary structure, homodimer. Within each dimer, one monomer is responsible for RNA recognition and catalysis, while the other monomer binds to the replacement base PreQ1. Requires Zn(2+) as cofactor.

It catalyses the reaction 7-aminomethyl-7-carbaguanine + guanosine(34) in tRNA = 7-aminomethyl-7-carbaguanosine(34) in tRNA + guanine. The protein operates within tRNA modification; tRNA-queuosine biosynthesis. Its function is as follows. Catalyzes the base-exchange of a guanine (G) residue with the queuine precursor 7-aminomethyl-7-deazaguanine (PreQ1) at position 34 (anticodon wobble position) in tRNAs with GU(N) anticodons (tRNA-Asp, -Asn, -His and -Tyr). Catalysis occurs through a double-displacement mechanism. The nucleophile active site attacks the C1' of nucleotide 34 to detach the guanine base from the RNA, forming a covalent enzyme-RNA intermediate. The proton acceptor active site deprotonates the incoming PreQ1, allowing a nucleophilic attack on the C1' of the ribose to form the product. After dissociation, two additional enzymatic reactions on the tRNA convert PreQ1 to queuine (Q), resulting in the hypermodified nucleoside queuosine (7-(((4,5-cis-dihydroxy-2-cyclopenten-1-yl)amino)methyl)-7-deazaguanosine). The polypeptide is Queuine tRNA-ribosyltransferase (Salmonella arizonae (strain ATCC BAA-731 / CDC346-86 / RSK2980)).